Reading from the N-terminus, the 694-residue chain is MLFRLWVFVLLTPCYSWRPWTISDESHCKNGNSENPIVRPGFITFNFYTKNDTRIYQVPKCLLGSDITYHLFDAINTTESLTNYEKRVTRFYEPPMNDILRLSTVPAVKQFNLDHSIQPQIVYSLNLYPSHGIYYIRVVEVRQMQYDNVSCKLPNSLNELIFPVQVRCAKITRYAGENIYTHFFTPDFMILYIQNPAGDLTMMYGNTTDINFKAPYRKSSFIFKQTLTDDLLLIVEKDVVDEEYRFISDATFVDETLDDVDEVEALLLKFNNLGIQTLLRGDCKKPDYAGIPQMMFLYGIVHFSYSTKNTGPMPVLRVLKTHENLLSIDSFVNRCVNVSEGTIQYPKMKEFLKYEPSDYSYITKNKSIPVSTLLTYLATAYETNVTISRYKWSDIANTLQKIYEKHMFFTNLTFSDRETLFMLAEIANFIPADERMQRHMQLLIGNLCNPVEIVSWAHMLTADKAPNLENIYSPCASPVRRDVTNSFVKTVLTYASLDRYRSDMMEMLSVYRPPDMARVAAIQCLSPSEPAASLPLPNVTFVISPSYVIKGVSLTITTTIVATSIIITAIPLNSTCVSTNYKYAGQDLLVLRNISSQTCEFCQSVVMEYDDIDGPLQYIYIKNIDELKTLTDPNNNLLVPNTRTHYLLLAKNGSVFEMSEVGIDIDQVSIILVIIYVLIAIIALFGLYRLIRLC.

Positions 1–16 (MLFRLWVFVLLTPCYS) are cleaved as a signal peptide. The Virion surface portion of the chain corresponds to 17-671 (WRPWTISDES…GIDIDQVSII (655 aa)). N-linked (GlcNAc...) asparagine; by host glycosylation is found at Asn51, Asn76, Asn148, Asn206, Asn337, Asn365, Asn384, Asn411, Asn538, Asn573, Asn593, and Asn652. The interval 174–234 (YAGENIYTHF…QTLTDDLLLI (61 aa)) is interaction with gL. Residues 672–692 (LVIIYVLIAIIALFGLYRLIR) traverse the membrane as a helical segment. The Intravirion segment spans residues 693–694 (LC).

Belongs to the herpesviridae glycoprotein H family. In terms of assembly, interacts with glycoprotein L (gL); this interaction is necessary for the correct processing and cell surface expression of gH. The heterodimer gH/gL seems to interact with gB trimers during fusion. N-glycosylated, O-glycosylated, and sialylated.

The protein localises to the virion membrane. It is found in the host cell membrane. Its subcellular location is the host endosome membrane. The heterodimer glycoprotein H-glycoprotein L is required for the fusion of viral and plasma membranes leading to virus entry into the host cell. Following initial binding to host receptor, membrane fusion is mediated by the fusion machinery composed of gB and the heterodimer gH/gL. May also be involved in the fusion between the virion envelope and the outer nuclear membrane during virion morphogenesis. The sequence is that of Envelope glycoprotein H from Human herpesvirus 6B (strain Z29) (HHV-6 variant B).